Consider the following 531-residue polypeptide: Zinc finger CCCH-type with G patch domain-containing protein (531 aa).

At methionine 1 the chain carries N-acetylmethionine. Positions 91–133 (EAPAAARGSGSETVPKAEAGPESAAGGQEEEEGEDEEELSGTK) are disordered. Residues 107-117 (AEAGPESAAGG) are compositionally biased toward low complexity. Over residues 118–129 (QEEEEGEDEEEL) the composition is skewed to acidic residues. The segment at 175 to 201 (KSLKPCPFFLEGKCRFKENCRFSHGQV) adopts a C3H1-type zinc-finger fold. The disordered stretch occupies residues 267 to 289 (PPLRTEATESDSDSDGTGDSSYA). Residues 333–379 (TRGIGSRLLTKMGYEFGKGLGRHAEGRVEPIHAVVLPRGKSLDQCVE) form the G-patch domain. Phosphoserine is present on serine 373. 3 disordered regions span residues 385–409 (TRVG…GGRP), 426–446 (APGA…DMYH), and 509–531 (RAQE…MTEF). Residues 426 to 438 (APGALEAGAAPAG) show a composition bias toward low complexity. The segment covering 518 to 531 (EQRKADTHKKMTEF) has biased composition (basic and acidic residues).

Interacts with CHD4/Mi-2; the interaction is direct. Post-translationally, ubiquitinated in case of infection by HIV-1, leading to its degradation. Ubiquitination is mediated by the CUL4A-RBX1-DDB1-DCAF1/VPRBP complex that is hijacked by HIV-1 via interaction between HIV-1 Vpr and DCAF1/VPRBP. In terms of tissue distribution, widely expressed.

It is found in the nucleus. Its function is as follows. Transcription repressor that specifically binds the 5'-GGAG[GA]A[GA]A-3' consensus sequence. Represses transcription by recruiting the chromatin multiprotein complex NuRD to target promoters. Negatively regulates expression of EGFR, a gene involved in cell proliferation, survival and migration. Its ability to repress genes of the EGFR pathway suggest it may act as a tumor suppressor. Able to suppress breast carcinogenesis. Antagonizes the transcription repression by isoform 1 by competing for the binding of the NuRD complex. Does not bind DNA. The sequence is that of Zinc finger CCCH-type with G patch domain-containing protein (ZGPAT) from Homo sapiens (Human).